The sequence spans 412 residues: Kelch repeat-containing protein At1g19470 (412 aa).

Residues 1 to 55 are disordered; that stretch reads MVNISEIPDDSNDGCDPNKKPEEQVLRRSRRIATRNENQNKKPKEEEEEDNRSVS. Over residues 16–26 the composition is skewed to basic and acidic residues; it reads DPNKKPEEQVL. 4 Kelch repeats span residues 156–202, 203–250, 255–291, and 292–345; these read EMYV…VVDG, KIYV…SAHA, KLYM…WDKT, and CCVV…EMAN.

This chain is Kelch repeat-containing protein At1g19470, found in Arabidopsis thaliana (Mouse-ear cress).